The following is a 472-amino-acid chain: MAAQTLYDKLWESHVVRTDPDGTSLLYIDRHLVHEVTSPQAFEGLKLAGRKPWRVHSIVATADHNTPTDNWDLGIAGIKDPVSRLQVETLDANVRETGALAYFPFMDRNQGIVHVVGPEQGATLPGMTVVCGDSHTSTHGAFAALAHGIGTSEVEHVMATQCLTAKKSKAMLVRVEGELQAGVTAKDIALAVIGRIGTAGGTGYAIEFAGSAIRGLSMEGRMTLCNMAIEAGARSGLVAVDQVTLDYVKGRPFAPTAEQWEAAVACWRELKSDEGAVFDAVVELDATTIAPQVTWGTSPEMVVAITDRVPDPAAEADPVKREGMQRALAYMGLTAGTPMAEIAVDKVFVGSCTNSRIEDLREAAAVVRGRRKADSVRLAMVVPGSGNVKAEAEAEGLDKIFVAAGFEWREPGCSMCLAMNADRLEPGERCASTSNRNFEGRQGQGGRTHLVSPAMAAAAAIAGHFVDIRKGY.

3 residues coordinate [4Fe-4S] cluster: C352, C413, and C416.

This sequence belongs to the aconitase/IPM isomerase family. LeuC type 1 subfamily. Heterodimer of LeuC and LeuD. [4Fe-4S] cluster is required as a cofactor.

The enzyme catalyses (2R,3S)-3-isopropylmalate = (2S)-2-isopropylmalate. Its pathway is amino-acid biosynthesis; L-leucine biosynthesis; L-leucine from 3-methyl-2-oxobutanoate: step 2/4. Its function is as follows. Catalyzes the isomerization between 2-isopropylmalate and 3-isopropylmalate, via the formation of 2-isopropylmaleate. This Laribacter hongkongensis (strain HLHK9) protein is 3-isopropylmalate dehydratase large subunit.